Reading from the N-terminus, the 115-residue chain is Large ribosomal subunit protein bL19 (115 aa).

Belongs to the bacterial ribosomal protein bL19 family.

Its function is as follows. This protein is located at the 30S-50S ribosomal subunit interface and may play a role in the structure and function of the aminoacyl-tRNA binding site. This chain is Large ribosomal subunit protein bL19, found in Enterobacter sp. (strain 638).